A 682-amino-acid polypeptide reads, in one-letter code: Epithelial sodium channel subunit alpha (682 aa).

Topologically, residues 1–111 (MLMRLLPLPS…CSKHNRMKTA (111 aa)) are cytoplasmic. The interval 34-69 (AQGPLPPQPLQGPLKGDKCEQPGLGPEPTAPQQHTE) is disordered. A helical membrane pass occupies residues 112–132 (FWAVLWLCTFGMMYWQFALLF). Over 133-586 (GEYFSYPVSL…SQWSLWFGSS (454 aa)) the chain is Extracellular. 10 cysteine pairs are disulfide-bonded: Cys159/Cys329, Cys253/Cys260, Cys306/Cys313, Cys418/Cys503, Cys440/Cys480, Cys440/Cys499, Cys444/Cys495, Cys453/Cys480, Cys453/Cys503, and Cys455/Cys469. A glycan (N-linked (GlcNAc...) asparagine) is linked at Asn191. The tract at residues 201–267 (RSRRSLADTL…SDCFYQTSSS (67 aa)) is gating release of inhibition by proteolysis (GRIP); protease-sensitive region that is responsible for the proteolytic activation of the channel. Positions 221 to 240 (PEPRRARSSDPSSVRDNNPR) are disordered. Residue Asn504 is glycosylated (N-linked (GlcNAc...) asparagine). Residues 587 to 607 (VLSVVEMAEFMFDLLVITLLM) form a helical membrane-spanning segment. The Cytoplasmic segment spans residues 608 to 682 (LLRRFRSRYW…SSAACAPREP (75 aa)). Residues 653 to 657 (PPPAY) carry the PY motif; recruits WW domain-containing proteins and is thereby required for ubiquitination and inhibition of the channel by NEDD4 and NEDD4L motif.

It belongs to the amiloride-sensitive sodium channel (TC 1.A.6) family. SCNN1A subfamily. As to quaternary structure, heterotrimer; containing an alpha/SCNN1A, a beta/SCNN1B and a gamma/SCNN1G subunit. Interacts with WWP1 (via WW domains). Interacts with WWP2 (via WW domains); inhibits the channel. Interacts with BPIFA1; the interaction is indirect via SCNN1B and inhibits the proteolytic processing of SCNN1A and SCNN1G and the activation of ENaC. Interacts with the full-length immature form of PCSK9 (pro-PCSK9). Ubiquitinated. Can be ubiquitinated at multiple sites and undergo monoubiquitination and polyubiquitination. Ubiquitination by NEDD4 or NEDD4L inhibits the ENaC channel through endocytosis, intracellular retention and degradation of its individual subunits. In terms of processing, N-glycosylated. Post-translationally, ENaC is activated through the proteolytic maturation of its subunits. Furin cleaves the SCNN1A subunit, which results in a stepwise increase in the open probability of the channel due to the release of an inhibitory tract. BPIFA1, which is recruited by the SCNN1B subunit, prevents the proteolytic activation of ENaC.

Its subcellular location is the apical cell membrane. It is found in the cell projection. The protein localises to the cilium. The protein resides in the cytoplasmic granule. It localises to the cytoplasm. Its subcellular location is the cytoplasmic vesicle. It is found in the secretory vesicle. The protein localises to the acrosome. The protein resides in the flagellum. It catalyses the reaction Na(+)(in) = Na(+)(out). Originally identified and characterized by its inhibition by the diuretic drug amiloride. In terms of biological role, this is one of the three pore-forming subunits of the heterotrimeric epithelial sodium channel (ENaC), a critical regulator of sodium balance and fluid homeostasis. ENaC operates in epithelial tissues, where it mediates the electrodiffusion of sodium ions from extracellular fluid through the apical membrane of cells, with water following osmotically. It plays a key role in maintaining sodium homeostasis through electrogenic sodium reabsorption in the kidneys. Additionally, ENaC is essential for airway surface liquid homeostasis, which is crucial for proper mucus clearance. This is Epithelial sodium channel subunit alpha from Cavia porcellus (Guinea pig).